The sequence spans 122 residues: Small ribosomal subunit protein uS13 (122 aa).

Residues 94 to 122 (RGLPVRGQKTKTNARTRKGPRKTVAGKRK) form a disordered region.

It belongs to the universal ribosomal protein uS13 family. As to quaternary structure, part of the 30S ribosomal subunit. Forms a loose heterodimer with protein S19. Forms two bridges to the 50S subunit in the 70S ribosome.

Located at the top of the head of the 30S subunit, it contacts several helices of the 16S rRNA. In the 70S ribosome it contacts the 23S rRNA (bridge B1a) and protein L5 of the 50S subunit (bridge B1b), connecting the 2 subunits; these bridges are implicated in subunit movement. Contacts the tRNAs in the A and P-sites. This is Small ribosomal subunit protein uS13 from Syntrophotalea carbinolica (strain DSM 2380 / NBRC 103641 / GraBd1) (Pelobacter carbinolicus).